A 640-amino-acid polypeptide reads, in one-letter code: Probable potassium transport system protein Kup 1 (640 aa).

12 consecutive transmembrane segments (helical) span residues 25-45 (LVLAALGVVYGDLGTSPLYAL), 65-85 (VVSLFLWSLILMVSVKYVMVL), 115-135 (AVGWVLLGLAGAAMLYGDGVI), 153-173 (PALAAYVVPATVVILAMLFMI), 181-201 (VGAAFGPILAAWFVAIAALGL), 227-247 (GFAGFVSLGAVVLCLTGAEAL), 263-283 (WYGLALPALILSYLGQGALLL), 305-325 (MVALSTLATIVASQALITAVF), 353-373 (IYLPLLNWTLMLATIAVVLGF), 381-401 (AAFGLAVSTTMAITTVLFAVL), 410-430 (WWAVALVAGSLFAIDLAFWLA), and 438-458 (GGWLPLLLGLAVFCVMGCWFG).

The protein belongs to the HAK/KUP transporter (TC 2.A.72) family.

The protein localises to the cell inner membrane. It carries out the reaction K(+)(in) + H(+)(in) = K(+)(out) + H(+)(out). Its function is as follows. Transport of potassium into the cell. Likely operates as a K(+):H(+) symporter. The protein is Probable potassium transport system protein Kup 1 of Chromobacterium violaceum (strain ATCC 12472 / DSM 30191 / JCM 1249 / CCUG 213 / NBRC 12614 / NCIMB 9131 / NCTC 9757 / MK).